The sequence spans 648 residues: Threonine--tRNA ligase (648 aa).

Residues Met1–Thr61 enclose the TGS domain. A catalytic region spans residues Asp243–Pro549. 3 residues coordinate Zn(2+): Cys349, His400, and His526.

It belongs to the class-II aminoacyl-tRNA synthetase family. In terms of assembly, homodimer. Zn(2+) is required as a cofactor.

The protein localises to the cytoplasm. The enzyme catalyses tRNA(Thr) + L-threonine + ATP = L-threonyl-tRNA(Thr) + AMP + diphosphate + H(+). In terms of biological role, catalyzes the attachment of threonine to tRNA(Thr) in a two-step reaction: L-threonine is first activated by ATP to form Thr-AMP and then transferred to the acceptor end of tRNA(Thr). Also edits incorrectly charged L-seryl-tRNA(Thr). This Orientia tsutsugamushi (strain Boryong) (Rickettsia tsutsugamushi) protein is Threonine--tRNA ligase.